We begin with the raw amino-acid sequence, 69 residues long: Pleurain-A2 (69 aa).

Residues 1–22 form the signal peptide; the sequence is MFTLKKTLLLLYFLGTISISLC. A propeptide spanning residues 23-43 is cleaved from the precursor; that stretch reads KQERDADEDDGRKMTEEEVKR. Residues cysteine 63 and cysteine 69 are joined by a disulfide bond.

Expressed by the skin glands.

The protein localises to the secreted. In terms of biological role, antimicrobial peptide. Has activity against the Gram-positive bacterium S.aureus ATCC2592 (MIC=15 ug/ml), the Gram-negative bacteria E.coli ATCC25922 (MIC=60 ug/ml), B.dysenteriae (MIC=60 ug/ml), H.pylori NTCT11637 (MIC=30 ug/ml), and the fungus C.albicans ATCC2002 (MIC=30 ug/ml). Has little hemolytic activity on rabbit red blood cells. In Nidirana pleuraden (Yunnan pond frog), this protein is Pleurain-A2.